Here is a 72-residue protein sequence, read N- to C-terminus: Small, acid-soluble spore protein C (72 aa).

Belongs to the alpha/beta-type SASP family.

Its function is as follows. SASP are bound to spore DNA. They are double-stranded DNA-binding proteins that cause DNA to change to an a-like conformation. They protect the DNA backbone from chemical and enzymatic cleavage and are thus involved in dormant spore's high resistance to UV light. The sequence is that of Small, acid-soluble spore protein C (sasP-C) from Priestia megaterium (Bacillus megaterium).